The primary structure comprises 548 residues: Palmitoyltransferase pfa3 (548 aa).

Residues 1 to 32 (MMATLATSPPTSPTWPKRRPRAWALRCERYCC) are Cytoplasmic-facing. Residues 33–53 (AAATYFPLAFVYSLTTWAVYV) form a helical membrane-spanning segment. Over 54-70 (EASIGLKPSRSPWIGLP) the chain is Extracellular. The chain crosses the membrane as a helical span at residues 71–91 (TSILGVLLYICLNASYTVAVF). Over 92-173 (TDPGSPLTTG…ATCVGLYNYK (82 aa)) the chain is Cytoplasmic. The DHHC domain maps to 130–180 (RYCKKCQCPKPDRAHHCSTCKRCVLKMDHHCPWLATCVGLYNYKAFLLFLI). Residues 174-194 (AFLLFLIYTSLFCWVDFAVSA) form a helical membrane-spanning segment. The Extracellular segment spans residues 195-215 (TWIWTEVFNDAPYLETMLPVN). The chain crosses the membrane as a helical span at residues 216–236 (VVLLAILGGIIGLVLTGFTAW). Topologically, residues 237 to 548 (HISLAVRGMT…EDSSEWRDWD (312 aa)) are cytoplasmic. Disordered stretches follow at residues 313-339 (RAEEGEERLSPAPEQPASHGVSDDQLT) and 463-548 (NPHQ…RDWD). Residues 508-535 (DPLNQQSVPANGAVNQLQKANEASSATT) show a composition bias toward polar residues. Positions 536 to 548 (NRREDSSEWRDWD) are enriched in basic and acidic residues.

Belongs to the DHHC palmitoyltransferase family. PFA3 subfamily. Autopalmitoylated.

It localises to the vacuole membrane. The enzyme catalyses L-cysteinyl-[protein] + hexadecanoyl-CoA = S-hexadecanoyl-L-cysteinyl-[protein] + CoA. Functionally, palmitoyltransferase specific for VAC8. Palmitoylates VAC8 at one or more of its N-terminal cysteine residues, which is required for its proper membrane localization. The chain is Palmitoyltransferase pfa3 (pfa3) from Aspergillus fumigatus (strain ATCC MYA-4609 / CBS 101355 / FGSC A1100 / Af293) (Neosartorya fumigata).